A 332-amino-acid chain; its full sequence is Endo-1,4-beta-xylanase (332 aa).

The N-terminal stretch at 1 to 21 (MLSSTTLLAILSALALTSVQA) is a signal peptide. The region spanning 26–316 (KNSLDYLANK…KSTYYVVQQA (291 aa)) is the GH10 domain. E120 serves as the catalytic Proton donor. A disulfide bridge connects residues C128 and C160. E214 acts as the Nucleophile in catalysis. Cysteines 247 and 253 form a disulfide.

It belongs to the glycosyl hydrolase 10 (cellulase F) family.

It is found in the secreted. The enzyme catalyses Endohydrolysis of (1-&gt;4)-beta-D-xylosidic linkages in xylans.. Its function is as follows. Requires at least three xylose residues for catalytic activity. Does not have activity against xylobiose. The polypeptide is Endo-1,4-beta-xylanase (Naganishia albida (Cryptococcus albidus)).